A 259-amino-acid polypeptide reads, in one-letter code: Ribonuclease HII (259 aa).

The region spanning threonine 70–glutamate 258 is the RNase H type-2 domain. A divalent metal cation contacts are provided by aspartate 76, glutamate 77, and aspartate 168.

It belongs to the RNase HII family. Mn(2+) is required as a cofactor. Requires Mg(2+) as cofactor.

It is found in the cytoplasm. It catalyses the reaction Endonucleolytic cleavage to 5'-phosphomonoester.. Endonuclease that specifically degrades the RNA of RNA-DNA hybrids. The sequence is that of Ribonuclease HII from Streptococcus pneumoniae (strain P1031).